The chain runs to 360 residues: N-acetylmuramoyl-L-alanine amidase CwlL (360 aa).

The N-terminal stretch at 1–39 is a signal peptide; the sequence is MVKVVKNFVKVNQYTRPGLKLAGVKGIVMHYTATPGASA. The 115-residue stretch at 40–154 folds into the N-acetylmuramoyl-L-alanine amidase domain; the sequence is LNERDYFNGT…DVTNKICPAP (115 aa). 4 consecutive repeat copies span residues 166–191, 196–259, 265–289, and 291–355. 2 X approximate repeats stretches follow at residues 166–289 and 196–355; these read RKKV…KVKS and LKKG…KAKL.

The protein belongs to the N-acetylmuramoyl-L-alanine amidase 2 family.

The protein localises to the secreted. It catalyses the reaction Hydrolyzes the link between N-acetylmuramoyl residues and L-amino acid residues in certain cell-wall glycopeptides.. The polypeptide is N-acetylmuramoyl-L-alanine amidase CwlL (cwlL) (Bacillus licheniformis).